Here is a 280-residue protein sequence, read N- to C-terminus: Equatorin (280 aa).

The first 19 residues, 1–19 (MDFILLIFLSGVFLPNIFS), serve as a signal peptide directing secretion. Topologically, residues 20–183 (LQPTVEQDPG…LSELEEIKLK (164 aa)) are vesicular. A disordered region spans residues 112-131 (ATASGEEDKRSEPSRKSSTP). Over residues 117 to 126 (EEDKRSEPSR) the composition is skewed to basic and acidic residues. The N-linked (GlcNAc...) asparagine glycan is linked to asparagine 145. A helical membrane pass occupies residues 184-204 (LMLGISLMTLILLIPLLIFCF). The Cytoplasmic portion of the chain corresponds to 205-280 (ATLYKLRHLR…AEVTEERISE (76 aa)). Phosphoserine is present on serine 279.

As to quaternary structure, interacts with SNAP25. Highly N- and O-glycosylated; contains sialic acid. In terms of tissue distribution, highly expressed in testis and epididymis. Low expression in other tissues.

The protein localises to the cytoplasmic vesicle. It localises to the secretory vesicle. It is found in the acrosome membrane. The protein resides in the acrosome inner membrane. Its subcellular location is the acrosome outer membrane. Its function is as follows. Acrosomal membrane-anchored protein involved in the process of fertilization and in acrosome biogenesis. This Rattus norvegicus (Rat) protein is Equatorin (Eqtn).